Here is a 288-residue protein sequence, read N- to C-terminus: Ribosomal RNA small subunit methyltransferase A (288 aa).

S-adenosyl-L-methionine-binding residues include Asn18, Leu20, Gly45, Glu66, Asp91, and Asn118.

This sequence belongs to the class I-like SAM-binding methyltransferase superfamily. rRNA adenine N(6)-methyltransferase family. RsmA subfamily.

It is found in the cytoplasm. It catalyses the reaction adenosine(1518)/adenosine(1519) in 16S rRNA + 4 S-adenosyl-L-methionine = N(6)-dimethyladenosine(1518)/N(6)-dimethyladenosine(1519) in 16S rRNA + 4 S-adenosyl-L-homocysteine + 4 H(+). Its function is as follows. Specifically dimethylates two adjacent adenosines (A1518 and A1519) in the loop of a conserved hairpin near the 3'-end of 16S rRNA in the 30S particle. May play a critical role in biogenesis of 30S subunits. This chain is Ribosomal RNA small subunit methyltransferase A, found in Mannheimia succiniciproducens (strain KCTC 0769BP / MBEL55E).